A 549-amino-acid chain; its full sequence is DNA mismatch repair protein MutL (549 aa).

The protein belongs to the DNA mismatch repair MutL/HexB family.

This protein is involved in the repair of mismatches in DNA. It is required for dam-dependent methyl-directed DNA mismatch repair. May act as a 'molecular matchmaker', a protein that promotes the formation of a stable complex between two or more DNA-binding proteins in an ATP-dependent manner without itself being part of a final effector complex. The sequence is that of DNA mismatch repair protein MutL from Pseudothermotoga lettingae (strain ATCC BAA-301 / DSM 14385 / NBRC 107922 / TMO) (Thermotoga lettingae).